The chain runs to 527 residues: D-3-phosphoglycerate dehydrogenase (527 aa).

Residues 149 to 150, aspartate 169, 228 to 230, and aspartate 254 contribute to the NAD(+) site; these read RV and AAR. The active site involves arginine 230. Glutamate 259 is a catalytic residue. The Proton donor role is filled by histidine 278. 278 to 281 lines the NAD(+) pocket; that stretch reads HIAA. One can recognise an ACT domain in the interval 453–527; that stretch reads YIISLHEDKP…GIIDATYVEL (75 aa).

This sequence belongs to the D-isomer specific 2-hydroxyacid dehydrogenase family.

The enzyme catalyses (2R)-3-phosphoglycerate + NAD(+) = 3-phosphooxypyruvate + NADH + H(+). It participates in amino-acid biosynthesis; L-serine biosynthesis; L-serine from 3-phospho-D-glycerate: step 1/3. This is D-3-phosphoglycerate dehydrogenase (serA) from Archaeoglobus fulgidus (strain ATCC 49558 / DSM 4304 / JCM 9628 / NBRC 100126 / VC-16).